The primary structure comprises 1227 residues: Pentatricopeptide repeat-containing protein At5g15280, mitochondrial (1227 aa).

Residues 1 to 31 (MLNLLSISSSSRLRFLNKVSSLTYHYSFAFF) constitute a mitochondrion transit peptide. PPR repeat units lie at residues 146–180 (LPQACEIMASMLIREGMVKEVELLLMEMERHGDTM), 182–216 (NEGIFCDLIGKYVDDFDSRKAVMLFDWMRRKGLVP), 217–251 (LTSCYQILIDQLVRVHRTESAYRICLDWVETRAEL), 255–289 (NIDSIGKVIELLCLDQKVQEARVLARKLVALGCIL), 290–320 (NSSIYSKITIGYNEKQDFEDLLSFIGEVKYE), 322–356 (DVFVGNRILHSLCRRFGSERAYVYMEELEHLGFKQ), 357–391 (DEVTFGILIGWCCYEGDIKRAVLYLSEIMSKGYKP), 392–426 (DVYSYNAILSGLFRKGLWQHTHCILDEMKENGMML), 427–461 (SLSTFKIMVTGYCKARQFEEAKRIVNKMFGYGLIE), 527–561 (VLPEFNSLIVRASEDGDLQTALRLLDEMARWGQKL), 562–597 (SRRSFAVLMRSLCASRAHLRVSISLLEKWPKLAYQL), 598–632 (DGETLNFLVQEYCKKGFSRHSKLIFHKMVQMHHPI), 633–667 (DNVTYTSLIRCFCKKETLNDLLNVWGAAQNDNWLP), 668–698 (DLNDCGDLWNCLVRKGLVEEVVQLFERVFIS), 703–737 (QSEACRIFVEKLTVLGFSCIAHSVVKRLEGEGCIV), 738–772 (EQEVYNHLIKGLCTEKKDSAAFAILDEMLDKKHIP), 773–800 (SLGSCLMLIPRLCRANKAGTAFNLAEQI), 802–836 (SSYVHYALIKGLSLAGKMLDAENQLRIMLSNGLSS), 837–871 (YNKIYNVMFQGYCKGNNWMKVEEVLGLMVRKNIIC), 872–906 (SVKSYREYVRKMCLEPQSLSAISLKEFLLLGESNP), 908–942 (GVIIYNMLIFYMFRAKNHLEVNKVLLEMQGRGVLP), 943–977 (DETTFNFLVHGYSSSADYSSSLRYLSAMISKGMKP), 978–1012 (NNRSLRAVTSSLCDNGDVKKALDLWQVMESKGWNL), 1014–1044 (SSVVQTKIVETLISKGEIPKAEDFLTRVTRN), 1047–1081 (MAPNYDNIIKKLSDRGNLDIAVHLLNTMLKNQSIP), 1082–1116 (GSSSYDSVINGLLRYNQLDKAMDFHTEMVELGLSP), 1117–1151 (SISTWSGLVHKFCEACQVLESERLIKSMVGLGESP), and 1152–1186 (SQEMFKTVIDRFRVEKNTVKASEMMEMMQKCGYEV).

The protein belongs to the PPR family. P subfamily.

It is found in the mitochondrion. In Arabidopsis thaliana (Mouse-ear cress), this protein is Pentatricopeptide repeat-containing protein At5g15280, mitochondrial.